The primary structure comprises 130 residues: Fluoride-specific ion channel FluC (130 aa).

4 helical membrane-spanning segments follow: residues 4–24 (MINV…RYFI), 35–55 (GFPI…GLLT), 68–88 (LNLF…TFSL), and 99–119 (AVFG…GVVL). Residues Gly-78 and Thr-81 each contribute to the Na(+) site.

This sequence belongs to the fluoride channel Fluc/FEX (TC 1.A.43) family.

The protein localises to the cell membrane. The enzyme catalyses fluoride(in) = fluoride(out). Its activity is regulated as follows. Na(+) is not transported, but it plays an essential structural role and its presence is essential for fluoride channel function. In terms of biological role, fluoride-specific ion channel. Important for reducing fluoride concentration in the cell, thus reducing its toxicity. This chain is Fluoride-specific ion channel FluC, found in Ruminiclostridium cellulolyticum (strain ATCC 35319 / DSM 5812 / JCM 6584 / H10) (Clostridium cellulolyticum).